The following is a 33-amino-acid chain: Cytochrome b6-f complex subunit 8 (33 aa).

A helical membrane pass occupies residues 2–22 (LFTFAWASLAAIFTFSIAMVV).

This sequence belongs to the PetN family. The 4 large subunits of the cytochrome b6-f complex are cytochrome b6, subunit IV (17 kDa polypeptide, PetD), cytochrome f and the Rieske protein, while the 4 small subunits are PetG, PetL, PetM and PetN. The complex functions as a dimer.

The protein localises to the cellular thylakoid membrane. Component of the cytochrome b6-f complex, which mediates electron transfer between photosystem II (PSII) and photosystem I (PSI), cyclic electron flow around PSI, and state transitions. The sequence is that of Cytochrome b6-f complex subunit 8 from Prochlorococcus marinus (strain SARG / CCMP1375 / SS120).